The chain runs to 3470 residues: MRGPHWRVPWLCLSCLYSCLLLLPDALATTSTQTPMSLSSSTRTSQMSSQASTSSTSSDRRTSKTEQTSTRDTPSSITTVSQSHHTTSMETSKPQTTTTTEVTTSTPSASSRDQIQTETSSQRTISPDGTTTSHAPSISSSAPSTTHMLTTTSSTESTSVDSGHTTAITTQGLTPATAQVSLTPSSQNMSTVSTPITSTLTQRQHTGSKQTSSKSQVNIVTSTLSTSTSDSTPAQTMSQVTSSSDKRTKPSTSGVSSTSLTTTEVLTQTSSTDSAPGNTTLRITQNSTTHTTKVSTTSTPQKLSPVSTLINSSQKMSTLPQNQHTESMDTSRQPQTTTTIEVTTSTPSASSLHQIQTETNSPKTISPGETTTSHAPNMRSSPPKTSQILTTMPSTKSTSVDTKQTKAITTKVSTPDTTQVSMTPSSQKLPTHSTSTQELTSSYSQHIQSKGTSSKSQTTTNTKVNTSTPSASSRDKIQTETSSQRTNSPGEKRTSHAPSMSSSAPSTTHMLSTTSSNQSTSVDTGQTTSVTAQGSTPAITQTSLTPSSQNTSTVSTPITSTHKLSTLSQSQHTGSKGTSSNPQTTTTTEVTTSTPSATTHDQIQTETSSQNTISPGETTTSYAPIMSSSAPSTTHMLSTTSSTQSTSVDTRHTTTLTNQGSTPATTQVSPSSQNMSTVSAPITSTQILSTFPQSQHTGSKGTSSNPQTTTTPVVTTSNPSATSRDQIQTETSSQRTISPGETTTSYASIMSSSAPSTTHMLTTTSSTQSTSVDTRHTIAVRTQGSTPATTQVSPSSQNMSTVSTPITSTQILSTLPQSQHTGSKGTSSNPQTTTSPVVTTSTPSGTSGDQIQTETSSQRTISPGKTTTSHALNINSSAPSTTHMLSTTSSTQSTSGDTRHTTAGRTQGSTPATTQVSPSSQNMSTVSAPITSIQMLSTLPQSQHTESKSTSTNPQTTTTPEVTTSNPSATSHDQIETETSSQRTISPGETTTSYAPIMSSSAPSTTHMLSTTSSTQSTSVDTRNTTTLTTQGSTPATTQVSPSSKNMSTVSTPITSTHKLSTLPQSQHTGSNGTSSSSSTPATHRSHLHPNMSTVSTPITTTHKLSTLSQSQHTGSKGTSSNPQTTTTPVMTTSTPSATTHDQIQTETSSQRTISHGETTTSYAPIMSSSAPSTTHMLSTASSTQITSVDTRHTTAITTQGSTPATTQVSPSSQNMSTVSAPITSIQILSTLPQSQHTGSKGTSTNPQTTTTPEVTTSTPSATSRDQIQTETSSQRTISPGETTTSHAPIMSSSAPSTTHMLSTTSSTQSTSVDTRHTTAGRTQGSTPATTQVSPSSQNMTTTSHALMSSSAPSTTHMLSTTSSTQSTSVDTRHTTTVTTQGSTPATTQVLPSSQNMSTVSAPITSTQILSTLPQSQHTGSKGTSTNPQTTTNAEVTTSTPSATSHDQIETETSSQRTISPGETTTSHAPNMSSSAPSTTHMLSSTSSTQITSVDTGHTSAGRTQGSTPATTQVSPSSQNMSTVSAPITSTHILSTLPKSQHTGSKGTSSNPQTTITPVVTTSTPSASSRDQIQTETSFQRTISPGETTTSHAPSMSSSAPSSTHMLSTASSTQITSVDTRHTTAITTQGSTPATTQVSPSSQNMSTVSAPITSIQMLSTLPQSQHTESKSTSTNPQTTTTPRVTTSTPSASSRDQIQTETSSQRTISPGKTTTSHVPNMNSSAPSTTHILSTTSSIQSTSGDTRHTTAVRTQGSTPATTQVSLAPSSQNMSTLSAPITSPQHFSTLPQNQHTGSMGTSSNPQSTTIPEVTTSTLSASSRDQVQTETSSQRTISPGETTTSHASSLSSSAPSSTHMLSTASSTEITSGDTRHTTAIVTQGSTPATTQTTLTPSSQNMSTVSTPITSTHKLSPLPQSQHTENMGTSSNPQTTTTPEVTTSTPSATSYDQIQTETSFQRTISPGETTTSHAPSMSNSAPSSTHKLSTASSTEITSVDTRHTIAITTQGSTLATTQTSLTPSSQNMSTVSAPITSSQILSTLRQSQHTGSKGTSSNHQTTTTPVVTTSTSSATSRDQIQTETSSLRTISPDGTTTSHASSMSSSSPNTTHLLITTSSTESTSVDTGYSTVITTHGSTLATTQVSLTPSSQNMSTVSMPSTSSQELTSLPQRQHTGNMETSSQPQNITPTVVTTSTLLSFSRGSTELQTMSWGTSSSGTINTLSTPVRNTSPASTSGILTSTLTTSGNTGYTGVTRSLGVITSRVTSTSLPGKSTVVHSTPAQPLSAHSQSHQTYGTGTPSMSQTSILPDMTSEKRVASSPGPTVTESFSHVSSSSGLTTKTDNDRNTAVSATSSTLTSPSPTTASRSTVPLPSLLPDQGISLFPYGSEVGDQNLFARTVDFNSPIFKILIGFPLGSSLRDSFYVTDNGQIIFPESDYDVFSYPNPPQRGFTGRERVAMVAPFWADADFSSSRGAIFYQEYVTFYNEHHQLIREVETLINDFTSSWGYRAKWTLKVTWVNVPAYTAQESFGTNTYQAILSTDGSRSYALFLYQNSGMRWDVTQEPYNRVLMGFSSGDGYFENSPLTFRPAMEKYRPDRFLNSKLGIRGLQVYRLHREERPNYRLKCLQWLESQPQQPSWGWSSVSCPCSWQQGQRDFRFRPINPGWWDRQLCSFSSGRGGVCCSYGAWGEFREGWRMHSPWQFDEEQEAQNWCCQWNDKPSFCVWYQLRRPRVSCAGYRPPRPAWTFGDPHITTLDNANFTFNGLGDFLLVQAQDRNSSFLLEGRTAQTGTAKATNFIAFAAQYNTSSLKSPITVQWFLEPSDKIRVVYNNQTVAFNTRDTEVLPIFNTTGVLLTQNGSQVSANFDGTVTISVIARSNILHASSSLSEEYRNHTEGLLGVWNDNPEDDFRMPNGSTIPSNSSEETLFYYGMTWHVNGTGLLGIRADPLPTKFTPIFLSQLLNQSASGEDLASGCKGDRKCMFDILATGNRTIGQSTNSILNEFQHMNDTLNQYPPSINCSSKIQAYKGQTVTTEITSNSKDATLSLSKKCSGFKLFENGSLQWTPTSPEACTLEILARDVRTNLSWVLQPKTVACFCSKEEQCLYNETSKEGNSSLEVTSCKCDGDTFGRLCERSKDPCDEPCFPNVNCIPGKGCEACPPNTTGDGRHCAALEDSCPNRSCPMNYCYNNGHCDISEAPGCQPTCTCPPAFTDNRCFLAGNSFTPTISMELPLRTIVLSLREDENASAADVNASVANILENLDMRAFFSNSLVELIRTSPGAQPSSKSIHHWKVTSHFKYRPRGPLIHYLNNQLIGAVMEAFLLQARQERQKRSGEARKDVHFFPISRADVQDQMALNLSMLEEYFTCDGYKGYHLVYSPQDGVTCVSPCSEGYCHNGGQCKHLPDGPQCSCASFTIYSSSGEHCEHLSVKLGAFYGILFGTLGALLLLGILAFMIFHFCGCSKNKFSYPLDSEL.

Positions 1–28 are cleaved as a signal peptide; it reads MRGPHWRVPWLCLSCLYSCLLLLPDALA. The tract at residues 32–163 is disordered; it reads TQTPMSLSSS…STESTSVDSG (132 aa). The segment covering 37–57 has biased composition (low complexity); it reads SLSSSTRTSQMSSQASTSSTS. O-linked (GalNAc...) threonine glycans are attached at residues T42, T44, T65, T68, T87, T91, T96, T97, T98, T99, T100, T103, T104, T106, T117, T130, T131, T132, T145, T146, T150, T151, T152, and T155. Residues 43 to 2501 are variable number of tandem repeats (VNTR); it reads RTSQMSSQAS…ETLINDFTSS (2459 aa). A compositionally biased stretch (polar residues) spans 66–85; the sequence is EQTSTRDTPSSITTVSQSHH. The span at 86-111 shows a compositional bias: low complexity; sequence TTSMETSKPQTTTTTEVTTSTPSASS. Over residues 112–129 the composition is skewed to polar residues; it reads RDQIQTETSSQRTISPDG. The segment covering 130–162 has biased composition (low complexity); that stretch reads TTTSHAPSISSSAPSTTHMLTTTSSTESTSVDS. An N-linked (GlcNAc...) asparagine glycan is attached at N188. Over residues 199 to 220 the composition is skewed to polar residues; that stretch reads TLTQRQHTGSKQTSSKSQVNIV. 7 disordered regions span residues 199-679, 691-925, 938-1219, 1232-1400, 1413-1524, 1537-1647, and 1660-1992; these read TLTQ…STVS, FPQS…NMST, TLPQ…MSTV, LPQS…MSTV, LPKS…NMST, and TLPQ…TEIT. Residues 221 to 232 are compositionally biased toward low complexity; the sequence is TSTLSTSTSDST. Residues 233–243 are compositionally biased toward polar residues; it reads PAQTMSQVTSS. O-linked (GalNAc...) threonine glycans are attached at residues T236 and T241. Residues 251–272 are compositionally biased toward low complexity; sequence STSGVSSTSLTTTEVLTQTSST. The span at 273-283 shows a compositional bias: polar residues; the sequence is DSAPGNTTLRI. Residues N278 and N286 are each glycosylated (N-linked (GlcNAc...) asparagine). Residues 284-299 show a composition bias toward low complexity; that stretch reads TQNSTTHTTKVSTTST. T297 is a glycosylation site (O-linked (GalNAc...) threonine). The segment covering 300–335 has biased composition (polar residues); the sequence is PQKLSPVSTLINSSQKMSTLPQNQHTESMDTSRQPQ. N-linked (GlcNAc...) asparagine glycosylation occurs at N311. Over residues 336 to 346 the composition is skewed to low complexity; that stretch reads TTTTIEVTTST. Over residues 347-448 the composition is skewed to polar residues; the sequence is PSASSLHQIQ…LTSSYSQHIQ (102 aa). T357, T370, T371, T372, T385, and T423 each carry an O-linked (GalNAc...) threonine glycan. Residues 449 to 470 show a composition bias toward low complexity; sequence SKGTSSKSQTTTNTKVNTSTPS. The N-linked (GlcNAc...) asparagine glycan is linked to N465. The span at 479-489 shows a compositional bias: polar residues; sequence TETSSQRTNSP. T494 is a glycosylation site (O-linked (GalNAc...) threonine). A compositionally biased stretch (low complexity) spans 496–510; sequence HAPSMSSSAPSTTHM. Positions 511 to 577 are enriched in polar residues; the sequence is LSTTSSNQST…SQSQHTGSKG (67 aa). O-linked (GalNAc...) threonine glycosylation occurs at T513. N-linked (GlcNAc...) asparagine glycosylation is present at N517. 2 O-linked (GalNAc...) threonine glycosylation sites follow: T542 and T545. N-linked (GlcNAc...) asparagine glycosylation occurs at N550. O-linked (GalNAc...) threonine glycosylation is found at T551, T584, T585, T586, T587, T588, T592, T594, T599, T605, T618, T619, T620, T633, T634, T639, T640, and T655. Low complexity predominate over residues 578–599; sequence TSSNPQTTTTTEVTTSTPSATT. Positions 600–631 are enriched in polar residues; that stretch reads HDQIQTETSSQNTISPGETTTSYAPIMSSSAP. Residues 632–647 show a composition bias toward low complexity; it reads STTHMLSTTSSTQSTS. 2 stretches are compositionally biased toward polar residues: residues 653–679 and 691–701; these read TTTLTNQGSTPATTQVSPSSQNMSTVS and FPQSQHTGSKG. N674 is a glycosylation site (N-linked (GlcNAc...) asparagine). T702, T708, T709, T710, T711, and T716 each carry an O-linked (GalNAc...) threonine glycan. Residues 702 to 723 show a composition bias toward low complexity; the sequence is TSSNPQTTTTPVVTTSNPSATS. N718 is a glycosylation site (N-linked (GlcNAc...) asparagine). Polar residues predominate over residues 724-741; it reads RDQIQTETSSQRTISPGE. Over residues 742-772 the composition is skewed to low complexity; it reads TTTSYASIMSSSAPSTTHMLTTTSSTQSTSV. O-linked (GalNAc...) threonine glycans are attached at residues T743, T744, T757, and T758. The span at 780 to 824 shows a compositional bias: polar residues; the sequence is VRTQGSTPATTQVSPSSQNMSTVSTPITSTQILSTLPQSQHTGSK. Residue N798 is glycosylated (N-linked (GlcNAc...) asparagine). Residues 825 to 848 show a composition bias toward low complexity; it reads GTSSNPQTTTSPVVTTSTPSGTSG. 9 O-linked (GalNAc...) threonine glycosylation sites follow: T826, T832, T833, T834, T839, T840, T842, T846, and T853. Over residues 849 to 879 the composition is skewed to polar residues; it reads DQIQTETSSQRTISPGKTTTSHALNINSSAP. N-linked (GlcNAc...) asparagine glycosylation is present at N875. Over residues 880 to 895 the composition is skewed to low complexity; that stretch reads STTHMLSTTSSTQSTS. O-linked (GalNAc...) threonine glycans are attached at residues T901 and T902. The segment covering 901–925 has biased composition (polar residues); that stretch reads TTAGRTQGSTPATTQVSPSSQNMST. N922 is a glycosylation site (N-linked (GlcNAc...) asparagine). Over residues 948-968 the composition is skewed to low complexity; that stretch reads KSTSTNPQTTTTPEVTTSNPS. T950, T952, T956, T957, T958, T959, T963, and T964 each carry an O-linked (GalNAc...) threonine glycan. N-linked (GlcNAc...) asparagine glycosylation is present at N966. A compositionally biased stretch (polar residues) spans 969 to 1003; that stretch reads ATSHDQIETETSSQRTISPGETTTSYAPIMSSSAP. Residues T990, T991, T992, T1005, T1006, T1011, T1012, and T1015 are each glycosylated (O-linked (GalNAc...) threonine). Residues 1004–1019 show a composition bias toward low complexity; sequence STTHMLSTTSSTQSTS. Residues 1020–1065 are compositionally biased toward polar residues; the sequence is VDTRNTTTLTTQGSTPATTQVSPSSKNMSTVSTPITSTHKLSTLPQ. N-linked (GlcNAc...) asparagine glycosylation occurs at N1024. 5 O-linked (GalNAc...) threonine glycosylation sites follow: T1025, T1026, T1027, T1029, and T1038. Residues N1046, N1072, and N1091 are each glycosylated (N-linked (GlcNAc...) asparagine). The span at 1066–1083 shows a compositional bias: low complexity; sequence SQHTGSNGTSSSSSTPAT. Polar residues predominate over residues 1091 to 1120; that stretch reads NMSTVSTPITTTHKLSTLSQSQHTGSKGTS. The span at 1121-1140 shows a compositional bias: low complexity; it reads SNPQTTTTPVMTTSTPSATT. O-linked (GalNAc...) threonine glycosylation is found at T1125, T1126, T1127, T1128, T1132, T1133, T1135, T1140, T1174, T1198, and T1207. Polar residues-rich tracts occupy residues 1141 to 1219 and 1232 to 1242; these read HDQI…MSTV and LPQSQHTGSKG. N-linked (GlcNAc...) asparagine glycosylation is present at N1215. 20 O-linked (GalNAc...) threonine glycosylation sites follow: T1243, T1245, T1249, T1250, T1251, T1252, T1256, T1257, T1259, T1263, T1270, T1283, T1284, T1285, T1298, T1299, T1304, T1305, T1318, and T1319. The segment covering 1243-1264 has biased composition (low complexity); the sequence is TSTNPQTTTTPEVTTSTPSATS. The span at 1265–1296 shows a compositional bias: polar residues; the sequence is RDQIQTETSSQRTISPGETTTSHAPIMSSSAP. Residues 1297–1312 are compositionally biased toward low complexity; that stretch reads STTHMLSTTSSTQSTS. The span at 1318–1353 shows a compositional bias: polar residues; that stretch reads TTAGRTQGSTPATTQVSPSSQNMTTTSHALMSSSAP. N-linked (GlcNAc...) asparagine glycosylation occurs at N1339. O-linked (GalNAc...) threonine glycans are attached at residues T1341, T1342, T1355, T1356, T1365, T1368, T1372, T1375, T1376, T1377, and T1379. Low complexity predominate over residues 1354-1390; that stretch reads STTHMLSTTSSTQSTSVDTRHTTTVTTQGSTPATTQV. 2 stretches are compositionally biased toward polar residues: residues 1391–1400 and 1413–1477; these read LPSSQNMSTV and LPQS…SSAP. An N-linked (GlcNAc...) asparagine glycan is attached at N1396. T1426, T1430, T1431, T1440, T1451, T1453, T1464, T1465, and T1466 each carry an O-linked (GalNAc...) threonine glycan. Residue N1471 is glycosylated (N-linked (GlcNAc...) asparagine). The segment covering 1478–1489 has biased composition (low complexity); sequence STTHMLSSTSST. 4 O-linked (GalNAc...) threonine glycosylation sites follow: T1479, T1480, T1499, and T1512. Polar residues-rich tracts occupy residues 1490–1524 and 1537–1553; these read QITSVDTGHTSAGRTQGSTPATTQVSPSSQNMSTV and LPKSQHTGSKGTSSNPQ. N1520 carries N-linked (GlcNAc...) asparagine glycosylation. T1554, T1555, T1557, and T1562 each carry an O-linked (GalNAc...) threonine glycan. The span at 1554 to 1569 shows a compositional bias: low complexity; that stretch reads TTITPVVTTSTPSASS. A compositionally biased stretch (polar residues) spans 1570-1587; the sequence is RDQIQTETSFQRTISPGE. T1588, T1589, T1590, T1604, T1609, T1627, T1635, and T1636 each carry an O-linked (GalNAc...) threonine glycan. A compositionally biased stretch (low complexity) spans 1588–1609; that stretch reads TTTSHAPSMSSSAPSSTHMLST. The segment covering 1610–1647 has biased composition (polar residues); the sequence is ASSTQITSVDTRHTTAITTQGSTPATTQVSPSSQNMST. A glycan (N-linked (GlcNAc...) asparagine) is linked at N1644. Over residues 1670 to 1693 the composition is skewed to low complexity; that stretch reads KSTSTNPQTTTTPRVTTSTPSASS. T1672, T1674, T1678, T1679, T1680, T1681, T1685, T1686, T1688, T1699, and T1714 each carry an O-linked (GalNAc...) threonine glycan. Polar residues predominate over residues 1694–1725; sequence RDQIQTETSSQRTISPGKTTTSHVPNMNSSAP. N1721 carries N-linked (GlcNAc...) asparagine glycosylation. The segment covering 1726-1742 has biased composition (low complexity); sequence STTHILSTTSSIQSTSG. Polar residues predominate over residues 1747–1837; it reads TTAVRTQGST…SSQRTISPGE (91 aa). An N-linked (GlcNAc...) asparagine glycan is attached at N1770. O-linked (GalNAc...) threonine glycosylation is found at T1838, T1839, T1840, T1854, T1873, T1874, T1888, T1889, and T1891. The span at 1838–1859 shows a compositional bias: low complexity; it reads TTTSHASSLSSSAPSSTHMLST. The segment covering 1860 to 1877 has biased composition (polar residues); that stretch reads ASSTEITSGDTRHTTAIV. Over residues 1878 to 1895 the composition is skewed to low complexity; it reads TQGSTPATTQTTLTPSSQ. The N-linked (GlcNAc...) asparagine glycan is linked to N1896. Over residues 1896–1927 the composition is skewed to polar residues; that stretch reads NMSTVSTPITSTHKLSPLPQSQHTENMGTSSN. A compositionally biased stretch (low complexity) spans 1928–1945; it reads PQTTTTPEVTTSTPSATS. O-linked (GalNAc...) threonine glycosylation is found at T1930, T1931, T1932, T1933, T1937, T1938, T1940, T1964, T1965, T1966, and T1980. Over residues 1946-1992 the composition is skewed to polar residues; it reads YDQIQTETSFQRTISPGETTTSHAPSMSNSAPSSTHKLSTASSTEIT. N-linked (GlcNAc...) asparagine glycosylation is present at N2022. Polar residues predominate over residues 2037–2055; it reads STLRQSQHTGSKGTSSNHQ. Disordered regions lie at residues 2037–2107, 2139–2185, 2205–2237, and 2262–2368; these read STLR…NTTH, QVSL…NITP, TMSWGTSSSGTINTLSTPVRNTSPASTSGILTS, and TSTS…TVPL. 2 O-linked (GalNAc...) threonine glycosylation sites follow: T2056 and T2057. Over residues 2056-2071 the composition is skewed to low complexity; the sequence is TTTTPVVTTSTSSATS. Positions 2072-2089 are enriched in polar residues; it reads RDQIQTETSSLRTISPDG. Residues T2090, T2091, and T2092 are each glycosylated (O-linked (GalNAc...) threonine). Over residues 2090–2107 the composition is skewed to low complexity; that stretch reads TTTSHASSMSSSSPNTTH. N-linked (GlcNAc...) asparagine glycosylation is present at N2104. O-linked (GalNAc...) threonine glycosylation is found at T2105 and T2106. N-linked (GlcNAc...) asparagine glycosylation is found at N2148, N2182, and N2225. 2 stretches are compositionally biased toward polar residues: residues 2205–2229 and 2262–2303; these read TMSWGTSSSGTINTLSTPVRNTSPA and TSTS…QTSI. T2264, T2352, T2354, T2359, and T2360 each carry an O-linked (GalNAc...) threonine glycan. A compositionally biased stretch (low complexity) spans 2344 to 2367; that stretch reads TAVSATSSTLTSPSPTTASRSTVP. The NIDO domain occupies 2458 to 2613; the sequence is PFWADADFSS…GLQVYRLHRE (156 aa). The AMOP domain maps to 2614 to 2726; that stretch reads ERPNYRLKCL…SFCVWYQLRR (113 aa). A VWFD domain is found at 2738–2937; it reads RPAWTFGDPH…TWHVNGTGLL (200 aa). N2755, N2773, N2801, N2827, N2844, N2853, N2888, N2909, N2916, N2932, N2958, N2985, N3003, N3014, N3054, N3079, N3102, N3109, N3157, and N3174 each carry an N-linked (GlcNAc...) asparagine glycan. One can recognise an EGF-like 1 domain in the interval 3173–3212; it reads PNRSCPMNYCYNNGHCDISEAPGCQPTCTCPPAFTDNRCF. Cystine bridges form between C3177-C3188, C3182-C3200, and C3202-C3211. 3 N-linked (GlcNAc...) asparagine glycosylation sites follow: N3240, N3247, and N3353. Residues 3382-3421 form the EGF-like 2 domain; that stretch reads VSPCSEGYCHNGGQCKHLPDGPQCSCASFTIYSSSGEHCE. Intrachain disulfides connect C3385–C3396, C3390–C3405, and C3407–C3420. Residues 3432-3452 form a helical membrane-spanning segment; it reads GILFGTLGALLLLGILAFMIF.

In terms of assembly, a heterodimeric complex, composed of a mucin-4 alpha chain and a cysteine-rich transmembrane mucin-4 beta chain. Mucin-4 beta chain interacts with ERBB2 via the EGF-like domain 1. In nonpolarized cells, associates with ERBB2 and ERBB3. Post-translationally, proteolytically cleaved into 2 chains, mucin-4 alpha chain and mucin-4 beta chain. In terms of processing, highly O-glycosylated. Predominantly N-glycosylated. In terms of tissue distribution, expressed in trachea, duodenum and intestine. Lower expression in stomach, salivary glands, liver, gallbladder, and kidney.

The protein resides in the cell membrane. It is found in the secreted. Membrane-bound mucin, a family of highly glycosylated proteins that constitute the major component of the mucus, the slimy and viscous secretion covering epithelial surfaces. These glycoproteins play important roles in the protection of the epithelium and are implicated in epithelial renewal and differentiation. Regulates cellular behavior through both anti-adhesive effects on cell-cell and cell-extracellular matrix interactions and its ability to act as an intramembrane ligand for ERBB2. Plays an important role in proliferation and differentiation of epithelial cells by inducing specific phosphorylation of ERBB2. In polarized epithelial cells, segregates ERBB2 and other ERBB receptors and prevents ERBB2 from acting as a coreceptor. The interaction with ERBB2 leads to enhanced expression of CDKN1B. The formation of a MUC4-ERBB2-ERBB3-NRG1 complex leads to down-regulation of CDKN1B, resulting in repression of apoptosis and stimulation of proliferation. Its ability to promote tumor growth may be mainly due to repression of apoptosis as opposed to proliferation. The chain is Mucin-4 (Muc4) from Mus musculus (Mouse).